The sequence spans 230 residues: MTTAARPTFEPARGGRGKGESDLSQLSKQYSSRDLPSHTKIKYRQTTQDAPEEVRSRDFRRELEERERVAVRDKNRDRPTREHTSSVSKKPRLDQIPAANLDADDPLTDEDADEDSDEDSDDDTAALLAELEKIKKERAEEQVRKELEQKAEEERIRMENILSGNPLLNLTGPAAQSQASFKVKRRWDDDVVFKNCAKGVDEMKKRQDKRFVNDTLRSEFHKKFMEKYVK.

The interval 1 to 126 (MTTAARPTFE…DEDSDDDTAA (126 aa)) is disordered. A compositionally biased stretch (polar residues) spans 22 to 34 (DLSQLSKQYSSRD). The segment covering 52–84 (EEVRSRDFRRELEERERVAVRDKNRDRPTREHT) has biased composition (basic and acidic residues). Acidic residues predominate over residues 102 to 124 (DADDPLTDEDADEDSDEDSDDDT). Positions 121–165 (DDDTAALLAELEKIKKERAEEQVRKELEQKAEEERIRMENILSGN) form a coiled coil.

The protein belongs to the CWC15 family. Identified in the spliceosome C complex. Component of the minor spliceosome, which splices U12-type introns.

The protein resides in the nucleus. Its function is as follows. Involved in pre-mRNA splicing as component of the spliceosome. In Xenopus laevis (African clawed frog), this protein is Protein CWC15 homolog B (cwc15-b).